Reading from the N-terminus, the 1733-residue chain is Gag-Pol polyprotein (1733 aa).

Residue G2 is the site of N-myristoyl glycine; by host attachment. Residues 109 to 112 carry the PTAP/PSAP motif motif; it reads PTAP. Positions 128-132 match the LYPX(n)L motif motif; it reads LYPAL. Disordered stretches follow at residues 139 to 218, 449 to 497, and 511 to 549; these read KPPK…LRMG, KEER…RPQL, and WAKDCPKKPRGPRGPRPQTSLLTLGDXGGQGQEPPPEPR. The PPXY motif signature appears at 161 to 164; the sequence is PPPY. Residue S190 is modified to Phosphoserine; by host. Residues 436 to 476 adopt a coiled-coil conformation; that stretch reads EEREERIRREIEEKEERRRAEDEQRERERDRRRHREMSKLL. Composition is skewed to basic and acidic residues over residues 449-464 and 484-497; these read KEERRRAEDEQRERER and RQDRQGGERRRPQL. The CCHC-type zinc-finger motif lies at 500-517; the sequence is DQCAYCKEKGHWAKDCPK. Residues 526–535 show a composition bias toward low complexity; that stretch reads RPQTSLLTLG. The region spanning 559–629 is the Peptidase A2 domain; the sequence is VTFLVDTGAQ…CPYPLLGRDL (71 aa). Residue D564 is the Protease; shared with dimeric partner of the active site. RNA contacts are provided by Y721, D771, R773, and P787. The Reverse transcriptase domain occupies 739–930; that stretch reads LDQGILVPCQ…KQVKYLGYLL (192 aa). D807 is a binding site for Mg(2+). Residues N851 and P853 each contribute to the RNA site. Mg(2+) is bound by residues D881 and D882. The DNA site is built by R941, R955, R958, and F966. Positions 1054 and 1055 each coordinate RNA. W1063 serves as a coordination point for DNA. RNA is bound at residue K1082. Position 1113 (R1113) interacts with DNA. An RNase H type-1 domain is found at 1172-1318; that stretch reads PDADYTWYTD…ADQAAREAAM (147 aa). D1181 lines the Mg(2+) pocket. RNA contacts are provided by S1184 and L1186. DNA contacts are provided by Q1187, S1214, and Q1216. E1219 and D1240 together coordinate Mg(2+). RNA is bound by residues R1242 and R1266. Mg(2+)-binding residues include D1310, D1453, and D1512. The region spanning 1442 to 1600 is the Integrase catalytic domain; that stretch reads RGHRPGTHWE…TPYEILYGAP (159 aa).

As to quaternary structure, homohexamer, that further associates as homomultimer. The virus core is composed of a lattice formed from hexagonal rings, each containing six capsid monomers. The protease is a homodimer, whose active site consists of two apposed aspartic acid residues. The reverse transcriptase is a monomer. In terms of assembly, interacts (via PPXY motif) with host NEDD4. Interacts (via PSAP motif) with host TSG101. Interacts (via LYPX(n)L motif) with host PDCD6IP. The reverse transcriptase is a monomer (Potential). Interacts (via RNase domains) with host release factor ETF1; this interaction is essential for translational readthrough of amber codon between viral gag and pol genes, as well as for viral replication. As to quaternary structure, homodimer. Mg(2+) serves as cofactor. Mn(2+) is required as a cofactor. Post-translationally, specific enzymatic cleavages by the viral protease yield mature proteins. The protease is released by autocatalytic cleavage. The polyprotein is cleaved during and after budding, this process is termed maturation. In terms of processing, sumoylated; which is required for virus replication. Phosphorylated on serine residues.

The protein resides in the host cell membrane. It is found in the virion. The catalysed reaction is DNA(n) + a 2'-deoxyribonucleoside 5'-triphosphate = DNA(n+1) + diphosphate. It carries out the reaction Endonucleolytic cleavage to 5'-phosphomonoester.. Plays a role in budding and is processed by the viral protease during virion maturation outside the cell. During budding, it recruits, in a PPXY-dependent or independent manner, Nedd4-like ubiquitin ligases that conjugate ubiquitin molecules to Gag, or to Gag binding host factors. Interaction with HECT ubiquitin ligases probably link the viral protein to the host ESCRT pathway and facilitate release. In terms of biological role, targets Gag and gag-pol polyproteins to the plasma membrane via a multipartite membrane binding signal, that includes its myristoylated N-terminus. Also mediates nuclear localization of the pre-integration complex. Its function is as follows. Forms the spherical core of the virion that encapsulates the genomic RNA-nucleocapsid complex. Functionally, involved in the packaging and encapsidation of two copies of the genome. Binds with high affinity to conserved UCUG elements within the packaging signal, located near the 5'-end of the genome. This binding is dependent on genome dimerization. Acts as a nucleic acid chaperone which is involved in rearrangement of nucleic acid secondary structures during gRNA retrotranscription. The aspartyl protease mediates proteolytic cleavages of Gag and Gag-Pol polyproteins during or shortly after the release of the virion from the plasma membrane. Cleavages take place as an ordered, step-wise cascade to yield mature proteins. This process is called maturation. Displays maximal activity during the budding process just prior to particle release from the cell. In terms of biological role, RT is a multifunctional enzyme that converts the viral dimeric RNA genome into dsDNA in the cytoplasm, shortly after virus entry into the cell. This enzyme displays a DNA polymerase activity that can copy either DNA or RNA templates, and a ribonuclease H (RNase H) activity that cleaves the RNA strand of RNA-DNA heteroduplexes in a partially processive 3' to 5' endonucleasic mode. Conversion of viral genomic RNA into dsDNA requires many steps. A tRNA binds to the primer-binding site (PBS) situated at the 5' end of the viral RNA. RT uses the 3' end of the tRNA primer to perform a short round of RNA-dependent minus-strand DNA synthesis. The reading proceeds through the U5 region and ends after the repeated (R) region which is present at both ends of viral RNA. The portion of the RNA-DNA heteroduplex is digested by the RNase H, resulting in a ssDNA product attached to the tRNA primer. This ssDNA/tRNA hybridizes with the identical R region situated at the 3' end of viral RNA. This template exchange, known as minus-strand DNA strong stop transfer, can be either intra- or intermolecular. RT uses the 3' end of this newly synthesized short ssDNA to perform the RNA-dependent minus-strand DNA synthesis of the whole template. RNase H digests the RNA template except for a polypurine tract (PPT) situated at the 5' end of the genome. It is not clear if both polymerase and RNase H activities are simultaneous. RNase H probably can proceed both in a polymerase-dependent (RNA cut into small fragments by the same RT performing DNA synthesis) and a polymerase-independent mode (cleavage of remaining RNA fragments by free RTs). Secondly, RT performs DNA-directed plus-strand DNA synthesis using the PPT that has not been removed by RNase H as primers. PPT and tRNA primers are then removed by RNase H. The 3' and 5' ssDNA PBS regions hybridize to form a circular dsDNA intermediate. Strand displacement synthesis by RT to the PBS and PPT ends produces a blunt ended, linear dsDNA copy of the viral genome that includes long terminal repeats (LTRs) at both ends. Its function is as follows. Catalyzes viral DNA integration into the host chromosome, by performing a series of DNA cutting and joining reactions. This enzyme activity takes place after virion entry into a cell and reverse transcription of the RNA genome in dsDNA. The first step in the integration process is 3' processing. This step requires a complex comprising the viral genome, matrix protein and integrase. This complex is called the pre-integration complex (PIC). The integrase protein removes 2 nucleotides from each 3' end of the viral DNA, leaving recessed CA OH's at the 3' ends. In the second step that requires cell division, the PIC enters cell nucleus. In the third step, termed strand transfer, the integrase protein joins the previously processed 3' ends to the 5' ends of strands of target cellular DNA at the site of integration. The last step is viral DNA integration into host chromosome. In Homo sapiens (Human), this protein is Gag-Pol polyprotein (gag-pol).